The following is a 967-amino-acid chain: Nonsense-mediated mRNA decay factor SMG8 (967 aa).

A disordered region spans residues 627–702; that stretch reads LNEGEDADAD…SCPESQSVAS (76 aa). Positions 628 to 639 are enriched in acidic residues; it reads NEGEDADADADS. Over residues 643–666 the composition is skewed to low complexity; it reads RSQICSSGQSSRSRSNSSSSDTSS. The span at 686–702 shows a compositional bias: polar residues; it reads ATEALSESCPESQSVAS.

It belongs to the SMG8 family.

In terms of biological role, involved in nonsense-mediated decay (NMD) of mRNAs containing premature stop codons. Probable component of kinase complex containing nonC and recruited to stalled ribosomes. The polypeptide is Nonsense-mediated mRNA decay factor SMG8 (Drosophila mojavensis (Fruit fly)).